A 433-amino-acid polypeptide reads, in one-letter code: LanC-like protein GCL1 (433 aa).

Residues 1-22 (MSSSVDFVTEQGRCGDDGNGAG) are disordered.

Belongs to the LanC-like protein family.

May play a role in signaling. May be not involved in abscisic acid (ABA) signaling. This chain is LanC-like protein GCL1 (GCL1), found in Arabidopsis thaliana (Mouse-ear cress).